A 157-amino-acid chain; its full sequence is Aspartate carbamoyltransferase regulatory chain (157 aa).

Zn(2+) contacts are provided by Cys108, Cys113, Cys138, and Cys141.

The protein belongs to the PyrI family. As to quaternary structure, contains catalytic and regulatory chains. Zn(2+) is required as a cofactor.

In terms of biological role, involved in allosteric regulation of aspartate carbamoyltransferase. The sequence is that of Aspartate carbamoyltransferase regulatory chain from Korarchaeum cryptofilum (strain OPF8).